The sequence spans 77 residues: U8-lycotoxin-Ls1j (77 aa).

An N-terminal signal peptide occupies residues 1 to 20 (MKLIIFTGLILFAIVSLIEA). Residues 21–26 (QANNEK) constitute a propeptide that is removed on maturation.

It belongs to the neurotoxin 19 (CSTX) family. 08 (U8-Lctx) subfamily. Post-translationally, contains 4 disulfide bonds. As to expression, expressed by the venom gland.

The protein localises to the secreted. The polypeptide is U8-lycotoxin-Ls1j (Lycosa singoriensis (Wolf spider)).